The primary structure comprises 1036 residues: KAT8 regulatory NSL complex subunit 1 (1036 aa).

At lysine 104 the chain carries N6-acetyllysine. 2 disordered regions span residues 145 to 211 (GQTA…CTLP) and 226 to 257 (NSTA…SSSN). Positions 226–244 (NSTANKSSVNSMDQPALQG) are enriched in polar residues. A compositionally biased stretch (low complexity) spans 245 to 256 (SSRLSPSTDSSS). A Phosphoserine modification is found at serine 249. Residue lysine 262 forms a Glycyl lysine isopeptide (Lys-Gly) (interchain with G-Cter in SUMO2) linkage. Serine 268 carries the phosphoserine modification. Residues 285–312 (TALLRRQADIEIRARRLQKRLQVVQAKQ) are a coiled coil. A Glycyl lysine isopeptide (Lys-Gly) (interchain with G-Cter in SUMO2) cross-link involves residue lysine 331. 2 disordered regions span residues 399–423 (DSDV…RADP) and 739–787 (SPSY…RRRG). Over residues 759 to 772 (STSSDTSTPTSSGS) the composition is skewed to low complexity. Residues 781 to 813 (PVRRRRGESSFDINNIVIPMSVAATTRVEKLQY) form a required for activation of KAT8 histone acetyltransferase activity region. Residues 815–966 (EILTPSWREV…GLDEQSVQPW (152 aa)) enclose the PEHE domain. Positions 841–859 (EDLSDAAFAALHAKCEEME) are interaction with KAT8 HAT domain. The interval 869–931 (VPPQRRGSRS…SPISPELHSA (63 aa)) is disordered. The segment covering 886–896 (TTPQLGSANPS) has biased composition (polar residues). Positions 906–919 (SSSHSLSEFSHGQS) are enriched in low complexity. Serine 922 and serine 925 each carry phosphoserine. Threonine 934 carries the post-translational modification Phosphothreonine. Serine 976 carries the phosphoserine modification. The segment at 989–1020 (DTAARCTRRTSGSKTGREAEVAPTSPPVVPLK) is disordered.

In terms of assembly, component of the NSL complex at least composed of MOF/KAT8, KANSL1, KANSL2, KANSL3, MCRS1, PHF20, OGT1/OGT, WDR5 and HCFC1. Interacts (via PEHE domain) with KAT8 (via HAT domain); the interaction is direct. Component of some MLL1/MLL complex, at least composed of the core components KMT2A/MLL1, ASH2L, HCFC1, WDR5 and RBBP5, as well as the facultative components BACC1, CHD8, E2F6, HSP70, INO80C, KANSL1, LAS1L, MAX, MCRS1, MGA, KAT8/MOF, PELP1, PHF20, PRP31, RING2, RUVB1/TIP49A, RUVB2/TIP49B, SENP3, TAF1, TAF4, TAF6, TAF7, TAF9 and TEX10.

The protein resides in the nucleus. It localises to the chromosome. The protein localises to the centromere. It is found in the kinetochore. Its subcellular location is the mitochondrion. The protein resides in the cytoplasm. It localises to the cytoskeleton. The protein localises to the spindle pole. In terms of biological role, non-catalytic component of the NSL histone acetyltransferase complex, a multiprotein complex that mediates histone H4 acetylation at 'Lys-5'- and 'Lys-8' (H4K5ac and H4K8ac) at transcription start sites and promotes transcription initiation. The NSL complex also acts as a regulator of gene expression in mitochondria. In addition to its role in transcription, KANSL1 also plays an essential role in spindle assembly during mitosis. Associates with microtubule ends and contributes to microtubule stability. This chain is KAT8 regulatory NSL complex subunit 1 (Kansl1), found in Mus musculus (Mouse).